A 181-amino-acid polypeptide reads, in one-letter code: MILKEKYLKEVKSNLQKQFNYSSSMEIPRIEKVILNMTAGKEVTNAKAIEEVINELTLISGQKPYQTVAKKSLASWKLREGMPMGGKVTLRSKNMWIFLNKLINIAMPRIRDFRGVSPKAFDGRGNYSLGIKEQIIFPEIEFDKIRKIKGLDVIIVTSAKTNKEARALLEGIGIPFAKVEK.

This sequence belongs to the universal ribosomal protein uL5 family. In terms of assembly, part of the 50S ribosomal subunit; part of the 5S rRNA/L5/L18/L25 subcomplex. Contacts the 5S rRNA and the P site tRNA. Forms a bridge to the 30S subunit in the 70S ribosome.

This is one of the proteins that bind and probably mediate the attachment of the 5S RNA into the large ribosomal subunit, where it forms part of the central protuberance. In the 70S ribosome it contacts protein S13 of the 30S subunit (bridge B1b), connecting the 2 subunits; this bridge is implicated in subunit movement. Contacts the P site tRNA; the 5S rRNA and some of its associated proteins might help stabilize positioning of ribosome-bound tRNAs. The polypeptide is Large ribosomal subunit protein uL5 (Mycoplasmopsis pulmonis (strain UAB CTIP) (Mycoplasma pulmonis)).